A 119-amino-acid chain; its full sequence is Large ribosomal subunit protein uL22 (119 aa).

The protein belongs to the universal ribosomal protein uL22 family. In terms of assembly, part of the 50S ribosomal subunit.

Its function is as follows. This protein binds specifically to 23S rRNA; its binding is stimulated by other ribosomal proteins, e.g. L4, L17, and L20. It is important during the early stages of 50S assembly. It makes multiple contacts with different domains of the 23S rRNA in the assembled 50S subunit and ribosome. The globular domain of the protein is located near the polypeptide exit tunnel on the outside of the subunit, while an extended beta-hairpin is found that lines the wall of the exit tunnel in the center of the 70S ribosome. The chain is Large ribosomal subunit protein uL22 from Microcystis aeruginosa (strain NIES-843 / IAM M-2473).